A 147-amino-acid chain; its full sequence is Putative HTH-type transcriptional regulator slr0846 (147 aa).

An HTH rrf2-type domain is found at 2 to 130 (KLTTKSHYSV…YSITLADLYY (129 aa)).

The protein is Putative HTH-type transcriptional regulator slr0846 of Synechocystis sp. (strain ATCC 27184 / PCC 6803 / Kazusa).